The sequence spans 1212 residues: Periplasmic/secreted acid trehalase ATH1 (1212 aa).

Residues 1–82 are Cytoplasmic-facing; that stretch reads MGFKDKILFW…STRVKIRRQN (82 aa). Residues 83-103 traverse the membrane as a helical segment; it reads ILNTTLILGMLIALVIWTAIL. Residues 104–1212 lie on the Periplasmic side of the membrane; that stretch reads STNSYFSSSL…ATIREIVLQE (1109 aa). N-linked (GlcNAc...) asparagine glycosylation is found at asparagine 243, asparagine 275, asparagine 296, asparagine 362, asparagine 414, asparagine 428, and asparagine 521. 546 to 547 lines the substrate pocket; sequence WD. N-linked (GlcNAc...) asparagine glycosylation is found at asparagine 572, asparagine 601, asparagine 661, and asparagine 671. Glutamate 677 serves as the catalytic Proton donor. Residues asparagine 729 and asparagine 738 are each glycosylated (N-linked (GlcNAc...) asparagine). Position 744–745 (744–745) interacts with substrate; that stretch reads KQ. N-linked (GlcNAc...) asparagine glycans are attached at residues asparagine 912, asparagine 938, asparagine 993, asparagine 1011, asparagine 1033, asparagine 1052, asparagine 1070, asparagine 1097, and asparagine 1165.

Belongs to the glycosyl hydrolase 65 family. Homodimer.

It is found in the secreted. The protein resides in the periplasm. The protein localises to the membrane. The enzyme catalyses alpha,alpha-trehalose + H2O = alpha-D-glucose + beta-D-glucose. In terms of biological role, periplasmic/secreted acid trehalase that catalyzes hydrolysis of the disaccharide trehalose and required for growth on trehalose as carbon source. Growth on trehalose is not restricted to respiration. This Candida glabrata (Yeast) protein is Periplasmic/secreted acid trehalase ATH1.